A 353-amino-acid chain; its full sequence is Ferrochelatase (353 aa).

Residues 1 to 13 (MTLERTGRDEEKA) are compositionally biased toward basic and acidic residues. Residues 1-23 (MTLERTGRDEEKALTQPPSGHSS) are disordered. 2 residues coordinate Fe cation: His223 and Glu304.

The protein belongs to the ferrochelatase family.

It localises to the cytoplasm. The enzyme catalyses heme b + 2 H(+) = protoporphyrin IX + Fe(2+). It functions in the pathway porphyrin-containing compound metabolism; protoheme biosynthesis; protoheme from protoporphyrin-IX: step 1/1. In terms of biological role, catalyzes the ferrous insertion into protoporphyrin IX. This chain is Ferrochelatase, found in Chelativorans sp. (strain BNC1).